The sequence spans 162 residues: Globin CTT-VI (162 aa).

The signal sequence occupies residues 1–15 (MKFLVLALCIAAASA). Residues 17–161 (VLTTEQADLV…TYAMLFSAMD (145 aa)) form the Globin domain. Residues H75 and H110 each contribute to the heme b site.

The protein belongs to the globin family. In terms of assembly, homodimer.

The sequence is that of Globin CTT-VI (CTT-6) from Chironomus thummi thummi (Midge).